Reading from the N-terminus, the 254-residue chain is tRNA 2'-phosphotransferase 1 (254 aa).

The residue at position 1 (Met1) is an N-acetylmethionine. 2 disordered regions span residues 1–30 (MNSFGGRRRETAGPKGRRAHRPPQDQDRDV) and 225–254 (RKPLSLAGNEEKEHQRDSKHSSRGRGMTQQ). Residues 233 to 244 (NEEKEHQRDSKH) show a composition bias toward basic and acidic residues.

The protein belongs to the KptA/TPT1 family.

It catalyses the reaction 2'-phospho-[ligated tRNA] + NAD(+) = mature tRNA + ADP-alpha-D-ribose 1'',2''-cyclic phosphate + nicotinamide. Catalyzes the last step of tRNA splicing, the transfer of the splice junction 2'-phosphate from ligated tRNA to NAD to produce ADP-ribose 1''-2'' cyclic phosphate. The chain is tRNA 2'-phosphotransferase 1 (TRPT1) from Bos taurus (Bovine).